We begin with the raw amino-acid sequence, 353 residues long: Protein RecA (353 aa).

65–72 (GPESSGKT) contacts ATP.

This sequence belongs to the RecA family.

It localises to the cytoplasm. In terms of biological role, can catalyze the hydrolysis of ATP in the presence of single-stranded DNA, the ATP-dependent uptake of single-stranded DNA by duplex DNA, and the ATP-dependent hybridization of homologous single-stranded DNAs. It interacts with LexA causing its activation and leading to its autocatalytic cleavage. The protein is Protein RecA of Aeromonas salmonicida (strain A449).